The chain runs to 84 residues: Cell division topological specificity factor (84 aa).

This sequence belongs to the MinE family.

Functionally, prevents the cell division inhibition by proteins MinC and MinD at internal division sites while permitting inhibition at polar sites. This ensures cell division at the proper site by restricting the formation of a division septum at the midpoint of the long axis of the cell. The chain is Cell division topological specificity factor from Pseudomonas syringae pv. syringae (strain B728a).